Consider the following 317-residue polypeptide: Melanocyte-stimulating hormone receptor (317 aa).

Residues 1 to 37 (MPAQGSQRSXLGSLNSTLMATPSLGLAANQSGPQCLE) lie on the Extracellular side of the membrane. N-linked (GlcNAc...) asparagine glycosylation is found at N15 and N29. The chain crosses the membrane as a helical span at residues 38 to 63 (VSVPDGLFLCLGLVSLVENMLVVAAI). The Cytoplasmic portion of the chain corresponds to 64 to 72 (AKNRNLHSP). The helical transmembrane segment at 73-93 (MYCFICCLALSDLLVSISNVL) threads the bilayer. Residues 94–118 (ETAVMLLLEAGALAVGATVVQQLDN) are Extracellular-facing. Residues 119–140 (VIDVLICSSMVSSLCFLGAIAM) traverse the membrane as a helical segment. The Cytoplasmic segment spans residues 141-163 (DRYISIFYALRYHSIVTLSRAQW). Residues 164 to 183 (ATAAVWAASILSSTLFIAYY) traverse the membrane as a helical segment. The Extracellular segment spans residues 184–191 (DRTVVLLC). A helical membrane pass occupies residues 192–211 (LVVFFLAMLVLMAVLYAHML). Residues 212–240 (TQACQHVQGITRLHKRQHLVQQGFGLKGA) lie on the Cytoplasmic side of the membrane. A helical membrane pass occupies residues 241–266 (ATLTILLGVFLLCWGPFFLHLTLIAV). The Extracellular portion of the chain corresponds to 267 to 279 (CPQHPTCSCVFKN). A helical membrane pass occupies residues 280–300 (FKLFLALIICNAIVDPLIYAF). Residues 301–317 (RSQELRKTLKEVLLFSW) lie on the Cytoplasmic side of the membrane.

The protein belongs to the G-protein coupled receptor 1 family. Interacts with MGRN1, but does not undergo MGRN1-mediated ubiquitination; this interaction competes with GNAS-binding and thus inhibits agonist-induced cAMP production. Interacts with OPN3; the interaction results in a decrease in MC1R-mediated cAMP signaling and ultimately a decrease in melanin production in melanocytes.

The protein localises to the cell membrane. Its function is as follows. Receptor for MSH (alpha, beta and gamma) and ACTH. The activity of this receptor is mediated by G proteins which activate adenylate cyclase. Mediates melanogenesis, the production of eumelanin (black/brown) and phaeomelanin (red/yellow), via regulation of cAMP signaling in melanocytes. This Galago senegalensis (Northern lesser bushbaby) protein is Melanocyte-stimulating hormone receptor (MC1R).